Here is a 78-residue protein sequence, read N- to C-terminus: Omega-conotoxin-like 2 (78 aa).

The signal sequence occupies residues 1-22; the sequence is MKLTCVVIVAVLLLTACQLITA. The propeptide occupies 23-42; that stretch reads DDSRGTQKHRSLRSTTKVSK. 3 disulfide bridges follow: cysteine 46/cysteine 62, cysteine 53/cysteine 65, and cysteine 61/cysteine 72.

This sequence belongs to the conotoxin O1 superfamily. As to expression, expressed by the venom duct.

The protein localises to the secreted. In terms of biological role, omega-conotoxins act at presynaptic membranes, they bind and block voltage-gated calcium channels (Cav). This chain is Omega-conotoxin-like 2, found in Conus striatus (Striated cone).